We begin with the raw amino-acid sequence, 303 residues long: Protoheme IX farnesyltransferase (303 aa).

9 helical membrane passes run 17-37, 42-62, 91-111, 114-134, 142-162, 168-188, 208-228, 231-251, and 270-290; these read GVVM…TEPA, LATF…SAAI, AAIT…YFLV, LTAW…TLYL, IVIG…AVTG, AWLL…ALAI, IPFT…CTLL, LTGM…LVFL, and FGYS…DHYL.

It belongs to the UbiA prenyltransferase family. Protoheme IX farnesyltransferase subfamily.

The protein localises to the cell inner membrane. The enzyme catalyses heme b + (2E,6E)-farnesyl diphosphate + H2O = Fe(II)-heme o + diphosphate. It functions in the pathway porphyrin-containing compound metabolism; heme O biosynthesis; heme O from protoheme: step 1/1. Its function is as follows. Converts heme B (protoheme IX) to heme O by substitution of the vinyl group on carbon 2 of heme B porphyrin ring with a hydroxyethyl farnesyl side group. In Alcanivorax borkumensis (strain ATCC 700651 / DSM 11573 / NCIMB 13689 / SK2), this protein is Protoheme IX farnesyltransferase.